Consider the following 119-residue polypeptide: Beta-2-microglobulin (119 aa).

A signal peptide spans 1–20 (MACFVVVALLVLLSLSGLEA). Positions 25–114 (PKIQVYSRHP…VTFSTPKTVK (90 aa)) constitute an Ig-like C1-type domain. Cysteines 45 and 100 form a disulfide.

It belongs to the beta-2-microglobulin family. In terms of assembly, heterodimer of an alpha chain and a beta chain. Beta-2-microglobulin is the beta-chain of major histocompatibility complex class I molecules.

The protein resides in the secreted. In terms of biological role, component of the class I major histocompatibility complex (MHC). Involved in the presentation of peptide antigens to the immune system. This is Beta-2-microglobulin (B2M) from Leontopithecus chrysopygus (Golden-rumped lion tamarin).